A 218-amino-acid chain; its full sequence is UPF0758 protein SAUSA300_1608 (218 aa).

Residues 92-214 (KITQPSDVAD…FTSLVEAGYF (123 aa)) enclose the MPN domain. Histidine 163, histidine 165, and aspartate 176 together coordinate Zn(2+). The JAMM motif signature appears at 163–176 (HNHPSGDVTPSQED).

This sequence belongs to the UPF0758 family.

This Staphylococcus aureus (strain USA300) protein is UPF0758 protein SAUSA300_1608.